The sequence spans 141 residues: Large ribosomal subunit protein uL11 (141 aa).

This sequence belongs to the universal ribosomal protein uL11 family. In terms of assembly, part of the ribosomal stalk of the 50S ribosomal subunit. Interacts with L10 and the large rRNA to form the base of the stalk. L10 forms an elongated spine to which L12 dimers bind in a sequential fashion forming a multimeric L10(L12)X complex. One or more lysine residues are methylated.

Functionally, forms part of the ribosomal stalk which helps the ribosome interact with GTP-bound translation factors. This Pediococcus pentosaceus (strain ATCC 25745 / CCUG 21536 / LMG 10740 / 183-1w) protein is Large ribosomal subunit protein uL11.